The primary structure comprises 544 residues: uncharacterized protein (544 aa).

12 helical membrane-spanning segments follow: residues 41 to 61 (FSAW…PSFA), 71 to 91 (AGTP…QCVA), 106 to 126 (GLYY…AAWL), 166 to 186 (YQIF…SSMP), 196 to 216 (WGTV…LAVA), 240 to 260 (WSNG…MSGY), 280 to 300 (AIVM…LCIA), 332 to 352 (VALT…CMVA), 391 to 411 (VVGI…NAIF), 413 to 433 (VGAI…VFFV), 451 to 471 (INGY…CFPQ), and 484 to 504 (WTCV…FVSA).

The protein belongs to the amino acid-polyamine-organocation (APC) superfamily.

The protein resides in the membrane. This is an uncharacterized protein from Schizosaccharomyces pombe (strain 972 / ATCC 24843) (Fission yeast).